The primary structure comprises 191 residues: MAPTLHPLIDNGITKGDPNFSGGTLRCHCRSKPVEVLLGGNVAHNHACGCSKCWKPAGSLFSVVGVIPREQVKVTANEEKLHIIDDSAVILRNACKECGVHMYGRIEKPHPFKGLDFVHVELSDQKGWQEPQFAAFVSSIIEQGFNPKGTDGVRRKFKSVGLETYDTLSPTLVDLISTWTAQQNGRLPAKL.

In terms of domain architecture, CENP-V/GFA spans 20–166; sequence FSGGTLRCHC…FKSVGLETYD (147 aa). Cysteine 27, cysteine 29, cysteine 48, cysteine 50, cysteine 53, cysteine 95, and cysteine 98 together coordinate Zn(2+).

Belongs to the Gfa family. Requires Zn(2+) as cofactor.

It carries out the reaction S-(hydroxymethyl)glutathione = glutathione + formaldehyde. Its pathway is one-carbon metabolism; formaldehyde degradation; formate from formaldehyde (glutathione route): step 1/3. In terms of biological role, catalyzes the condensation of formaldehyde and glutathione to S-hydroxymethylglutathione. This is Putative glutathione-dependent formaldehyde-activating enzyme from Colletotrichum graminicola (strain M1.001 / M2 / FGSC 10212) (Maize anthracnose fungus).